The following is a 195-amino-acid chain: Pyruvoyl-dependent arginine decarboxylase AaxB (195 aa).

Serine 53 is subject to Pyruvic acid (Ser).

This sequence belongs to the pyruvoyl-dependent arginine decarboxylase family. Trimer of an alpha-beta dimer. Requires pyruvate as cofactor.

It localises to the cytoplasm. The catalysed reaction is L-arginine + H(+) = agmatine + CO2. Functionally, part of the AaxABC system, catalyzes the decarboxylation of L-arginine. The arginine uptake by the bacterium in the macrophage may be a virulence factor against the host innate immune response. This Chlamydia trachomatis serovar L2 (strain ATCC VR-902B / DSM 19102 / 434/Bu) protein is Pyruvoyl-dependent arginine decarboxylase AaxB (aaxB).